We begin with the raw amino-acid sequence, 222 residues long: Glutathione S-transferase A1 (222 aa).

M1 bears the N-acetylmethionine mark. Residue A2 is modified to N-acetylalanine; in Glutathione S-transferase A1, N-terminally processed. The region spanning 3–83 (GKPTLHYFNG…YIATKYNLYG (81 aa)) is the GST N-terminal domain. K4 is subject to N6-succinyllysine. Residues Y9, K45, 54–55 (QV), and 67–68 (QT) contribute to the glutathione site. Residues 85–208 (DMKERALIDM…QPGSQRKPPT (124 aa)) form the GST C-terminal domain.

Belongs to the GST superfamily. Alpha family. As to quaternary structure, homodimer or heterodimer of GSTA1 and GSTA2. In terms of tissue distribution, expressed in corpus luteum, adrenal gland, testis, liver, lung, thyroid and kidney.

It is found in the cytoplasm. The enzyme catalyses RX + glutathione = an S-substituted glutathione + a halide anion + H(+). It carries out the reaction prostaglandin A2 + glutathione = prostaglandin A2-S-(R)-glutathione. The catalysed reaction is prostaglandin J2 + glutathione = prostaglandin J2-S-(R)-glutathione. It catalyses the reaction (13S)-hydroperoxy-(9Z,11E)-octadecadienoate + 2 glutathione = (13S)-hydroxy-(9Z,11E)-octadecadienoate + glutathione disulfide + H2O. The enzyme catalyses androst-5-ene-3,17-dione = androst-4-ene-3,17-dione. Glutathione S-transferase that catalyzes the nucleophilic attack of the sulfur atom of glutathione on the electrophilic groups of a wide range of exogenous and endogenous compounds. Involved in the formation of glutathione conjugates of both prostaglandin A2 (PGA2) and prostaglandin J2 (PGJ2). It also catalyzes the isomerization of D5-androstene-3,17-dione (AD) into D4-androstene-3,17-dione and may therefore play an important role in hormone biosynthesis. Through its glutathione-dependent peroxidase activity toward the fatty acid hydroperoxide (13S)-hydroperoxy-(9Z,11E)-octadecadienoate/13-HPODE it is also involved in the metabolism of oxidized linoleic acid. This Bos taurus (Bovine) protein is Glutathione S-transferase A1 (GSTA1).